The primary structure comprises 747 residues: MTESWEQGKGRRTQPPWSAPNTNEQPGLRLYNSLTRSKELFFPQVGRKVTWYCCGPTVYDASHMGHARSYISFDILRRVLRDYFKYDVFYCMNITDIDDKIIKRARQRHLFQQYRESNPPHSDLLQDVNTALIPFLQRISETNDPDKKQMLERIQTAVSAALLPLQDALNKNTGAEELQKHSQVLMEAAVDLLSDWLDEKHGAQIADNSIFSQLPKYWEGEYHKDMEALNVLTPDVLTRVSEYVPEIVAFVQKIVDNGYGYVSNGSVYFSTAKFHDSENHFYAKLVPEAVGDQKALQEGEGDLSISADRLSEKQSPNDFALWKASKPGEPSWESPWGKGRPGWHIECSAMAGSILGESMDIHGGGFDLRFPHHDNELAQSEAYFDNDHWVRYFLHTGHLTIAGCKMSKSLKNFITIKDALQKNTARQLRLAFLMHSWKDTLDYSNNTMESAVQYEKFMNEFFLNVKDLLRAPTDITGQFVKWEVLEIELNNCFYSKKAAIHEALCDNIDTRTVMEEMRSLVSQCNSYIASKKVAKQFPNRMLLRSISSYLTSMLKVFGAIEGEEVIGFPIGGSENSMNLESTVMPYLQVLSQFREGVRQIARQHKVTEVLQLSDLLRDDILPELGVRLEDHEGLPTVVKLVDRETLLKEKEEKRKAEEEKQRKKEEAARKKQQQEAAKLEKMKISPSQMFTLETDKYSQFDESGFPTHDTEGKELSKGQTKKLRKLFEVQEKLHKEYLQMVQNGTTA.

Residues 1–26 are disordered; it reads MTESWEQGKGRRTQPPWSAPNTNEQP. The span at 15 to 25 shows a compositional bias: polar residues; the sequence is PPWSAPNTNEQ. Position 54 (cysteine 54) interacts with Zn(2+). Glycine 55 lines the L-cysteine pocket. The short motif at 56-66 is the 'HIGH' region element; sequence PTVYDASHMGH. Threonine 95 contributes to the L-cysteine binding site. The 'KIIK' region motif lies at 100–103; the sequence is KIIK. Zn(2+) is bound by residues cysteine 347, histidine 372, and glutamate 376. Histidine 372 contacts L-cysteine. The 'KMSKS' region motif lies at 405–409; the sequence is KMSKS. Residue lysine 408 coordinates ATP. A compositionally biased stretch (basic and acidic residues) spans 651 to 683; the sequence is EEKRKAEEEKQRKKEEAARKKQQQEAAKLEKMK. 2 disordered regions span residues 651 to 685 and 700 to 721; these read EEKR…MKIS and FDES…GQTK.

The protein belongs to the class-I aminoacyl-tRNA synthetase family. As to quaternary structure, homodimer. Zn(2+) serves as cofactor.

Its subcellular location is the cytoplasm. It carries out the reaction tRNA(Cys) + L-cysteine + ATP = L-cysteinyl-tRNA(Cys) + AMP + diphosphate. Its function is as follows. Catalyzes the ATP-dependent ligation of cysteine to tRNA(Cys). This Xenopus laevis (African clawed frog) protein is Cysteine--tRNA ligase, cytoplasmic (cars1).